We begin with the raw amino-acid sequence, 186 residues long: UPF0301 protein Saro_0683 (186 aa).

Belongs to the UPF0301 (AlgH) family.

The chain is UPF0301 protein Saro_0683 from Novosphingobium aromaticivorans (strain ATCC 700278 / DSM 12444 / CCUG 56034 / CIP 105152 / NBRC 16084 / F199).